The primary structure comprises 478 residues: Dihydrolipoyl dehydrogenase (478 aa).

FAD-binding positions include 36–45, Lys54, and Ala117; that span reads ERYSTLGGVC. The cysteines at positions 45 and 50 are disulfide-linked. NAD(+) is bound by residues 183-187, Glu206, Val239, and 270-273; these read GGGII and AIGR. Residues Asp313 and Ala321 each contribute to the FAD site. His445 (proton acceptor) is an active-site residue.

The protein belongs to the class-I pyridine nucleotide-disulfide oxidoreductase family. In terms of assembly, homodimer. FAD serves as cofactor.

Its subcellular location is the cytoplasm. It carries out the reaction N(6)-[(R)-dihydrolipoyl]-L-lysyl-[protein] + NAD(+) = N(6)-[(R)-lipoyl]-L-lysyl-[protein] + NADH + H(+). In terms of biological role, lipoamide dehydrogenase is a component of the alpha-ketoacid dehydrogenase complexes. The polypeptide is Dihydrolipoyl dehydrogenase (lpdA) (Haemophilus influenzae (strain ATCC 51907 / DSM 11121 / KW20 / Rd)).